A 628-amino-acid chain; its full sequence is WW domain-containing adapter protein with coiled-coil (628 aa).

Disordered stretches follow at residues Met1–Ser130, Glu152–Pro338, and Asn417–Ser532. Positions Ser37–Thr49 are enriched in basic and acidic residues. Over residues Gly74 to Val84 the composition is skewed to basic residues. Residues Asn101 to Ser121 are compositionally biased toward low complexity. Residues Tyr123–Glu156 enclose the WW domain. Basic and acidic residues-rich tracts occupy residues Glu152–Ser168 and Pro176–Ala185. Positions Asp199–Ser213 are enriched in polar residues. Over residues Arg214–Ser227 the composition is skewed to basic and acidic residues. Low complexity-rich tracts occupy residues Ser230–Pro260 and Ser299–Val331. The segment covering Pro420–Val446 has biased composition (polar residues). Residues Gly467 to Lys486 show a composition bias toward low complexity. Residues Pro511–Ser532 show a composition bias toward polar residues. Positions Gln599–Ser625 form a coiled coil.

It localises to the nucleus. Its function is as follows. Acts as a linker between gene transcription and histone H2B monoubiquitination at 'Lys-120' (H2BK120ub1). Positive regulator of amino acid starvation-induced autophagy. Positively regulates MTOR activity. May negatively regulate the ubiquitin proteasome pathway. In Xenopus tropicalis (Western clawed frog), this protein is WW domain-containing adapter protein with coiled-coil (wac).